We begin with the raw amino-acid sequence, 89 residues long: MNKNEKMVRSLMGTVVSNKMNDTVVVRVERRVKHPKYGKFIKRSTKIHAHDKGNECQIGDIVTIRECRPISKTKSWTLVKINERAEKVE.

Belongs to the universal ribosomal protein uS17 family. In terms of assembly, part of the 30S ribosomal subunit.

Functionally, one of the primary rRNA binding proteins, it binds specifically to the 5'-end of 16S ribosomal RNA. The chain is Small ribosomal subunit protein uS17 from Coxiella burnetii (strain RSA 331 / Henzerling II).